A 598-amino-acid polypeptide reads, in one-letter code: tRNA(Met) cytidine acetyltransferase TmcA (598 aa).

ATP is bound by residues glutamine 141, 163-172 (GRGKSTLAGK), and arginine 288. The N-acetyltransferase domain occupies 332 to 490 (TDLRRLFDAD…HSAMMLYPLS (159 aa)). Acetyl-CoA contacts are provided by residues 411–413 (IAV), 418–424 (QNQGIGS), and arginine 462.

Belongs to the RNA cytidine acetyltransferase family. TmcA subfamily.

The protein resides in the cytoplasm. The enzyme catalyses cytidine(34) in elongator tRNA(Met) + acetyl-CoA + ATP + H2O = N(4)-acetylcytidine(34) in elongator tRNA(Met) + ADP + phosphate + CoA + H(+). Its function is as follows. Catalyzes the formation of N(4)-acetylcytidine (ac(4)C) at the wobble position of tRNA(Met), by using acetyl-CoA as an acetyl donor and ATP (or GTP). The chain is tRNA(Met) cytidine acetyltransferase TmcA from Haemophilus ducreyi (strain 35000HP / ATCC 700724).